We begin with the raw amino-acid sequence, 409 residues long: Broad specificity amino-acid racemase (409 aa).

Residues 1 to 24 (MPFRRTLLAASLALLITGQAPLYA) form the signal peptide. An intrachain disulfide couples Cys-71 to Cys-97. Residue Lys-75 is the Proton acceptor of the active site. Lys-75 is subject to N6-(pyridoxal phosphate)lysine. Substrate is bound at residue Arg-174. Tyr-301 acts as the Proton acceptor in catalysis. Met-349 is a binding site for substrate.

The protein belongs to the alanine racemase family. Bsr subfamily. It depends on pyridoxal 5'-phosphate as a cofactor.

It localises to the periplasm. The catalysed reaction is an L-alpha-amino acid = a D-alpha-amino acid. It carries out the reaction L-lysine = D-lysine. It catalyses the reaction L-arginine = D-arginine. The enzyme catalyses L-glutamine = D-glutamine. In terms of biological role, amino-acid racemase able to utilize a broad range of substrates. Reversibly racemizes 9 of the 19 natural chiral amino acids known, including both positively charged amino acids (Lys, Arg and His) and non-beta-branched aliphatic amino acids (Ala, Leu, Met, Ser, Gln and Asn). Among these amino acids, activity is the highest with lysine and arginine, and poor or very poor with the others. Plays a primary role in the catabolism of basic amino acid, that allows P.putida strain KT2440 to grow on L-Lys and L-Arg as the sole source of carbon and nitrogen, through conversion to their respective D-enantiomers. In Pseudomonas putida (strain ATCC 47054 / DSM 6125 / CFBP 8728 / NCIMB 11950 / KT2440), this protein is Broad specificity amino-acid racemase.